A 440-amino-acid chain; its full sequence is Chromosome partition protein MukF (440 aa).

Positions 208–236 (LSETSGTLRELQDTLEAAGDKLQANLLRI) are leucine-zipper.

This sequence belongs to the MukF family. In terms of assembly, interacts, and probably forms a ternary complex, with MukE and MukB via its C-terminal region. The complex formation is stimulated by calcium or magnesium. It is required for an interaction between MukE and MukB.

The protein localises to the cytoplasm. It localises to the nucleoid. Its function is as follows. Involved in chromosome condensation, segregation and cell cycle progression. May participate in facilitating chromosome segregation by condensation DNA from both sides of a centrally located replisome during cell division. Not required for mini-F plasmid partitioning. Probably acts via its interaction with MukB and MukE. Overexpression results in anucleate cells. It has a calcium binding activity. The sequence is that of Chromosome partition protein MukF from Yersinia pestis.